Reading from the N-terminus, the 399-residue chain is Zinc finger TRAF-type-containing protein 1 (399 aa).

Residues 1-13 (MSGAEEAGGGGPA) show a composition bias toward gly residues. The tract at residues 1 to 20 (MSGAEEAGGGGPAAGPAGAV) is disordered. An RING-type; degenerate zinc finger spans residues 106–151 (CTVCLDLPKASVYQCTNGHLMCAGCFIHLLADARLKEEQATCPNCR). The segment at 152–210 (CEISKSLCCRNLAVEKAVSELPSECGFCLRQFPRSLLERHQKEECQDRVTQCKYKRIGC) adopts a TRAF-type zinc-finger fold.

Belongs to the ZFTRAF1 family. Interacts with LGALS3.

It is found in the cytoplasm. It localises to the perinuclear region. This Rattus norvegicus (Rat) protein is Zinc finger TRAF-type-containing protein 1.